Reading from the N-terminus, the 1083-residue chain is DNA primase (1083 aa).

The CHC2-type zinc finger occupies 1022-1061 (CLRYPHRGGRTAPRTFVSLRVDHHNRLCISLAQQCFATKC).

It belongs to the herpesviridae DNA primase family. As to quaternary structure, associates with the helicase and the primase-associated factor to form the helicase-primase factor.

The protein localises to the host nucleus. Essential component of the helicase/primase complex. Unwinds the DNA at the replication forks and generates single-stranded DNA for both leading and lagging strand synthesis. The primase initiates primer synthesis and thereby produces large amount of short RNA primers on the lagging strand that the polymerase elongates using dNTPs. This Varicella-zoster virus (strain Oka vaccine) (HHV-3) protein is DNA primase.